A 362-amino-acid polypeptide reads, in one-letter code: Protein BIG GRAIN 1-like D (362 aa).

Disordered stretches follow at residues 22–113 (IDPK…TLFH), 132–168 (KFNR…GGRI), and 303–327 (VKTN…ASDS). Residues 23–47 (DPKTQKTQPYVGSVNTTTKKQSIVT) are compositionally biased toward polar residues. Positions 50–60 (VPDRKIHRDRF) are enriched in basic and acidic residues. Positions 63–78 (SVSSSSDSNSSIFSSS) are enriched in low complexity. Residues 132–144 (KFNRHDENWENTR) are compositionally biased toward basic and acidic residues. Residues 309 to 324 (EDYEDDDEDDDDDDVA) are compositionally biased toward acidic residues.

Belongs to the BIG GRAIN 1 (BG1) plant protein family.

It is found in the cell membrane. In terms of biological role, involved in auxin transport. Regulator of the auxin signaling pathway. This Arabidopsis thaliana (Mouse-ear cress) protein is Protein BIG GRAIN 1-like D.